Reading from the N-terminus, the 478-residue chain is Bifunctional protein HldE (478 aa).

Residues 1–318 (MKVTLPDFRQ…ENAIRGRADT (318 aa)) form a ribokinase region. Position 195–198 (195–198 (NLSE)) interacts with ATP. Residue aspartate 264 is part of the active site. Residues 344–478 (MTNGCFDILH…NTIKANASKS (135 aa)) form a cytidylyltransferase region.

The protein in the N-terminal section; belongs to the carbohydrate kinase PfkB family. It in the C-terminal section; belongs to the cytidylyltransferase family. As to quaternary structure, homodimer.

The catalysed reaction is D-glycero-beta-D-manno-heptose 7-phosphate + ATP = D-glycero-beta-D-manno-heptose 1,7-bisphosphate + ADP + H(+). It carries out the reaction D-glycero-beta-D-manno-heptose 1-phosphate + ATP + H(+) = ADP-D-glycero-beta-D-manno-heptose + diphosphate. It participates in nucleotide-sugar biosynthesis; ADP-L-glycero-beta-D-manno-heptose biosynthesis; ADP-L-glycero-beta-D-manno-heptose from D-glycero-beta-D-manno-heptose 7-phosphate: step 1/4. Its pathway is nucleotide-sugar biosynthesis; ADP-L-glycero-beta-D-manno-heptose biosynthesis; ADP-L-glycero-beta-D-manno-heptose from D-glycero-beta-D-manno-heptose 7-phosphate: step 3/4. Its function is as follows. Catalyzes the phosphorylation of D-glycero-D-manno-heptose 7-phosphate at the C-1 position to selectively form D-glycero-beta-D-manno-heptose-1,7-bisphosphate. In terms of biological role, catalyzes the ADP transfer from ATP to D-glycero-beta-D-manno-heptose 1-phosphate, yielding ADP-D-glycero-beta-D-manno-heptose. The polypeptide is Bifunctional protein HldE (Pectobacterium carotovorum subsp. carotovorum (strain PC1)).